Reading from the N-terminus, the 138-residue chain is Small ribosomal subunit protein uS11 (138 aa).

Residues 1–12 (MPPAKKAAAAPK) show a composition bias toward low complexity. Residues 1 to 27 (MPPAKKAAAAPKKGQKTRRREKKNVPH) are disordered. Residues 13-22 (KGQKTRRREK) are compositionally biased toward basic residues.

It belongs to the universal ribosomal protein uS11 family. In terms of assembly, part of the 30S ribosomal subunit. Interacts with proteins S7 and S18. Binds to IF-3.

Located on the platform of the 30S subunit, it bridges several disparate RNA helices of the 16S rRNA. Forms part of the Shine-Dalgarno cleft in the 70S ribosome. The chain is Small ribosomal subunit protein uS11 from Mycolicibacterium paratuberculosis (strain ATCC BAA-968 / K-10) (Mycobacterium paratuberculosis).